The primary structure comprises 387 residues: Chorismate synthase (387 aa).

The NADP(+) site is built by R42 and R48. Residues 131-133 (RSS), 251-252 (QA), G295, 310-314 (KPIPT), and R336 each bind FMN.

It belongs to the chorismate synthase family. In terms of assembly, homotetramer. FMNH2 serves as cofactor.

The catalysed reaction is 5-O-(1-carboxyvinyl)-3-phosphoshikimate = chorismate + phosphate. The protein operates within metabolic intermediate biosynthesis; chorismate biosynthesis; chorismate from D-erythrose 4-phosphate and phosphoenolpyruvate: step 7/7. Its function is as follows. Catalyzes the anti-1,4-elimination of the C-3 phosphate and the C-6 proR hydrogen from 5-enolpyruvylshikimate-3-phosphate (EPSP) to yield chorismate, which is the branch point compound that serves as the starting substrate for the three terminal pathways of aromatic amino acid biosynthesis. This reaction introduces a second double bond into the aromatic ring system. The sequence is that of Chorismate synthase from Syntrophotalea carbinolica (strain DSM 2380 / NBRC 103641 / GraBd1) (Pelobacter carbinolicus).